The sequence spans 360 residues: Glucan endo-1,3-beta-glucosidase B (360 aa).

Residues 1–25 (MATSQIAIIVLLGLLVATNIHITEA) form the signal peptide. Q26 carries the post-translational modification Pyrrolidone carboxylic acid. Residue E120 is the Proton donor of the active site. Catalysis depends on E265, which acts as the Nucleophile. The propeptide at 341 to 360 (VSERVWDITNSTASSLTSEI) is removed in mature form. A glycan (N-linked (GlcNAc...) asparagine) is linked at N350.

The protein belongs to the glycosyl hydrolase 17 family.

It localises to the vacuole. The enzyme catalyses Hydrolysis of (1-&gt;3)-beta-D-glucosidic linkages in (1-&gt;3)-beta-D-glucans.. In terms of biological role, implicated in the defense of plants against pathogens. In Solanum lycopersicum (Tomato), this protein is Glucan endo-1,3-beta-glucosidase B.